The following is a 232-amino-acid chain: Orotidine 5'-phosphate decarboxylase (232 aa).

Substrate-binding positions include Asp11, Lys33, 60–69 (DLKFHDIPNT), Thr120, Arg181, Gln190, Gly210, and Arg211. Lys62 functions as the Proton donor in the catalytic mechanism.

The protein belongs to the OMP decarboxylase family. Type 1 subfamily. As to quaternary structure, homodimer.

It carries out the reaction orotidine 5'-phosphate + H(+) = UMP + CO2. The protein operates within pyrimidine metabolism; UMP biosynthesis via de novo pathway; UMP from orotate: step 2/2. In terms of biological role, catalyzes the decarboxylation of orotidine 5'-monophosphate (OMP) to uridine 5'-monophosphate (UMP). In Vibrio vulnificus (strain YJ016), this protein is Orotidine 5'-phosphate decarboxylase.